The primary structure comprises 142 residues: Large ribosomal subunit protein uL13 (142 aa).

The protein belongs to the universal ribosomal protein uL13 family. Part of the 50S ribosomal subunit.

Its function is as follows. This protein is one of the early assembly proteins of the 50S ribosomal subunit, although it is not seen to bind rRNA by itself. It is important during the early stages of 50S assembly. The protein is Large ribosomal subunit protein uL13 of Lachnospira eligens (strain ATCC 27750 / DSM 3376 / VPI C15-48 / C15-B4) (Eubacterium eligens).